Reading from the N-terminus, the 509-residue chain is Mitogen-activated protein kinase sma-5 (509 aa).

The interval 19-72 (DPITSMSPPQENRSPKAEYLNNFFNTNPTNGKSRGSQEAPRKPLGQTNLNVQGS) is disordered. 2 stretches are compositionally biased toward polar residues: residues 20–30 (PITSMSPPQEN) and 40–54 (NFFNTNPTNGKSRGS). Residues 105-411 (YEPTQNIGSG…IQDALLHPYI (307 aa)) form the Protein kinase domain. Residues 111-119 (IGSGAFGIV) and Lys-134 contribute to the ATP site. Asp-231 acts as the Proton acceptor in catalysis. A disordered region spans residues 460–482 (YSELHSGDSTGSTSDMSTNTSGE). The segment covering 466 to 481 (GDSTGSTSDMSTNTSG) has biased composition (low complexity).

This sequence belongs to the protein kinase superfamily. CMGC Ser/Thr protein kinase family. MAP kinase subfamily. Mg(2+) is required as a cofactor. As to expression, expressed in intestine with a stronger expression in the four most anterior cells, muscles, excretory cell, pharynx and, to a lesser extent, in hypodermis.

It carries out the reaction L-seryl-[protein] + ATP = O-phospho-L-seryl-[protein] + ADP + H(+). The catalysed reaction is L-threonyl-[protein] + ATP = O-phospho-L-threonyl-[protein] + ADP + H(+). In terms of biological role, serine/threonine-protein kinase involved in the postembryonic regulation of body size, mainly through control of cell growth. In particular, controls the volume of intestine, muscles and hypodermis. In addition, regulates growth, intestinal granule distribution, lifespan and number of offspring. The protein is Mitogen-activated protein kinase sma-5 of Caenorhabditis elegans.